Reading from the N-terminus, the 154-residue chain is SsrA-binding protein (154 aa).

It belongs to the SmpB family.

It localises to the cytoplasm. Functionally, required for rescue of stalled ribosomes mediated by trans-translation. Binds to transfer-messenger RNA (tmRNA), required for stable association of tmRNA with ribosomes. tmRNA and SmpB together mimic tRNA shape, replacing the anticodon stem-loop with SmpB. tmRNA is encoded by the ssrA gene; the 2 termini fold to resemble tRNA(Ala) and it encodes a 'tag peptide', a short internal open reading frame. During trans-translation Ala-aminoacylated tmRNA acts like a tRNA, entering the A-site of stalled ribosomes, displacing the stalled mRNA. The ribosome then switches to translate the ORF on the tmRNA; the nascent peptide is terminated with the 'tag peptide' encoded by the tmRNA and targeted for degradation. The ribosome is freed to recommence translation, which seems to be the essential function of trans-translation. The protein is SsrA-binding protein of Staphylococcus saprophyticus subsp. saprophyticus (strain ATCC 15305 / DSM 20229 / NCIMB 8711 / NCTC 7292 / S-41).